The sequence spans 188 residues: uncharacterized protein (188 aa).

This is an uncharacterized protein from Haemophilus influenzae (strain ATCC 51907 / DSM 11121 / KW20 / Rd).